A 1886-amino-acid chain; its full sequence is MARASLVQPALWALLLLQVVGPAAAAKLNIPKVLLPFTRATRVNFTLEASEGCYRWSSTRPEVASIEPLGSSEQQCSQKAVVQARLTQPARLTSIIFAEDITTGQVLRCDAIVDLIHGIQIVSTTRELYLEDSPLELKIQALDSEGNTFSTLAGLVFDWTIVKDTEANGFSDSHNALRILTFLESTYIPPSYISEMEKAAKQGDTILVSGMKTGSSKLKARIQEAVYKNVRPAEVRLLILENILLNPAYDVYLLVGTSIHYKVQKIRQGKITELSMPSDQYELQLQNSIPDPQGDPARPVAILTQDTSRVTAMQMGQSNLVLGHRSIRMQGASRLPNSTIYVVEAGYLGFTVYPGDRWVLETGHLYAITIEVFDRSSNKVYPSDNIRIEAVLPAEFFEVLSSSQNGSYHHIRAIQSGQTAISATLTSVVDQDGGVHVLQVPVWNQQEVDIHIPITLYPSILTFPWQPKTGAYQYTIKAHGGSGNFSWSSSSSMVATVTVKGVMTTSGDTGLSVIRAHDVQNPLHFGEMKVYVIEPSSMEFAPCQVEARVGHTLELPLTISGFMPGGGSEVVTLSDCSHFDLVVEVENQGVFQPLPGRLPPGPEHCSGVKVKADAQGSTTLLVSYTHGHVHLDAKITLAAYLPLKAVDPSSVAVVTLGSSKEMLFEGGPRPWVLEPSKFFRNVTSEDTGSISLSLLGPPASRNYQQHRVLMTCQALGEQVIALSVGNRPSLSNPFPAVEPTVVKSICAPPSRLTLMPVYALPQLDLSCPLLQQNKQVVPVSSHRNPLLDLGAYDQQGRRFDNFSSLSIQWESSRPLLASIELDQPMQLVSQDDGNGQKKLHGLQTVSVHEASGTTAISATATGYQQSHLSEARVKQPHDPLVPVSASIELILVEDVRVSPEEMTIYNHPGVQVELYITEGSGYFFLNTSTQDIIKVAYQDTRGVALVHPLLPGSSTVMVHDLCLAFPAPAKAIIHVSDIQELYVRVVDKVEIGKAVKAYVRVLDFYKKPFLAKYFTFMDLKLQAASQIITLVTLDEALDNYTATFLVHGVAIGQTSLSASVTDKSGQRVSSTPQQIEVFPPFRLIPRKVTLIIGAMMQITSEGGPQPQSNILFSINNESVAAVSSSGLVRGLMVGNGSVLGVVQAVDAETGKVIIVSQDLVEVEVLQLQAVRIRAPITRMRTGTQMPVFVTGITSNQSPFSFGNAVPGLTFHWSVTKRDVLDLRGRHHEVSIRLPPQYNFAMNVYGRVKGRTGLRVVVKALDPTAGQLHGLGKELSDEIQIQVFEKLRLLNPEIEAEQILMSPNSFIKLQTNRDGAAILSYRVLDGPEKAPIVHTDEKGFLVSGSGIGVSTLEVIAQEPFGTNQTILVAVKVSPVSYLRISMSPVLHTQHKEALTALPLGMTVTFIVHFHDSSGDIFHAHNSVLNFATNRDDFVQIGKGATNNTCIIRTVSVGLTLLHVWDVEHLGLSDFVPLPVLQAITPELSGAVVVGDILCLASVLTSLGGVSGTWSSSASHVLYVDPKTGVAIARDAGSVTVYYEIAGQLKTFKEIVVGTPQKIVARRLHSAQTSIQEATASKVTVSVGDRSSNLLGECSPAQREAIEALHPESLISCQLQFKQDVFDFPACDVFTVEPGFDAALGQYLCSVTMRRLTDKQLKHLNMKKTSLAVTASIPSSYTSVEKVGAEVPFSPGLYANQAEILLSNHYTSSEVKVFGAVESLENLEVKSGSPAVLAFVKEKSFGLPSFITYTVGVLDPTAGSQGPLSTALTFSSPATNQAITIPVTVAFVLDRRGPGPYGASLLSHFLDSYQVMFFTFFALLAGTAVTIIAYHTVCAPRELASPLALTPRASPQHSPHYLASSPAAFNTLPSGRKASPPSGLWSPAYASH.

A signal peptide spans 1-26 (MARASLVQPALWALLLLQVVGPAAAA). The Perinuclear space segment spans residues 27–1808 (KLNIPKVLLP…LLSHFLDSYQ (1782 aa)). N-linked (GlcNAc...) asparagine glycosylation is found at Asn-44, Asn-337, Asn-405, Asn-484, Asn-681, Asn-801, Asn-926, Asn-1039, Asn-1116, Asn-1135, Asn-1362, and Asn-1441. A BIG2 domain is found at 1078–1151 (FPPFRLIPRK…VQAVDAETGK (74 aa)). The helical transmembrane segment at 1809–1829 (VMFFTFFALLAGTAVTIIAYH) threads the bilayer. Residues 1830–1886 (TVCAPRELASPLALTPRASPQHSPHYLASSPAAFNTLPSGRKASPPSGLWSPAYASH) lie on the Cytoplasmic side of the membrane. Residue Ser-1839 is modified to Phosphoserine. Thr-1844 is modified (phosphothreonine). 4 positions are modified to phosphoserine: Ser-1873, Ser-1876, Ser-1880, and Ser-1885.

This sequence belongs to the NUP210 family. As to quaternary structure, forms dimers and possibly higher-order oligomers. Post-translationally, N-glycosylated, but not all potential glycosylation sites may be used. Contains high-mannose type oligosaccharides. In terms of processing, phosphorylated at Ser-1880 in mitosis specifically; not phosphorylated in interphase.

It localises to the nucleus. It is found in the nuclear pore complex. Its subcellular location is the nucleus membrane. The protein resides in the endoplasmic reticulum membrane. In terms of biological role, nucleoporin essential for nuclear pore assembly and fusion, nuclear pore spacing, as well as structural integrity. The polypeptide is Nuclear pore membrane glycoprotein 210 (Nup210) (Mus musculus (Mouse)).